The chain runs to 574 residues: Fusion glycoprotein F0 (574 aa).

An N-terminal signal peptide occupies residues 1-25 (MELPILKANAITTILAAVTFCFASS). The Extracellular portion of the chain corresponds to 26–524 (QNITEEFYQS…HVNAGKSTTN (499 aa)). Residues Asn-27 and Asn-70 are each glycosylated (N-linked (GlcNAc...) asparagine; by host). 7 disulfide bridges follow: Cys-37/Cys-439, Cys-69/Cys-212, Cys-313/Cys-343, Cys-322/Cys-333, Cys-358/Cys-367, Cys-382/Cys-393, and Cys-416/Cys-422. The stretch at 76 to 96 (VKLINQELDKYKNAVTELQLL) forms a coiled coil. N-linked (GlcNAc...) asparagine; by host glycosylation is found at Asn-116, Asn-120, and Asn-126. Residues 137-157 (FLGFLLGVGSAIASGIAVSKV) are fusion peptide. Positions 158-209 (LHLEGEVNKIKSALLSTNKAVVSLSNGVSVLTSKVLDLKNYIDKQLLPIVNK) form a coiled coil. Residues 481-516 (LVFPSDEFDASISQVNEKINQSLAFIRKSDELLHHV) adopt a coiled-coil conformation. N-linked (GlcNAc...) asparagine; by host glycosylation occurs at Asn-500. Residues 525-550 (IMITTIIIVIIVILLSLIAVGLLLYC) traverse the membrane as a helical segment. Residue Cys-550 is the site of S-palmitoyl cysteine; by host attachment. Residues 551–574 (KARSTPVTLSKDQLSGINNIAFSN) are Cytoplasmic-facing.

This sequence belongs to the paramyxoviruses fusion glycoprotein family. In terms of assembly, homotrimer. Heterodimer with fusion protein F2; disulfide-linked. Interacts with host NCL; this interaction plays a role in viral entry into the host cell. As a heterodimer with F2, interacts with host heparan sulfate. As a heterodimer with F2, interacts with host IGF1R; this interaction activates PRKCZ/PKCzeta that recruits NCL/nucleolin from the host nucleus to the plasma membrane. Part of a complex composed of F1, F2 and G glycoproteins. As a heterodimer with F2, interacts with host RHOA; this interaction facilitates virus-induced syncytium formation. Homotrimer. Heterodimer with fusion protein F1; disulfide-linked. As a heterodimer with F1, interacts with host heparan sulfate. As a heterodimer with F1, interacts with host IGF1R; this interaction activates PRKCZ/PKCzeta that recruits NCL/nucleolin from the host nucleus to the plasma membrane. Part of a complex composed of F1, F2 and G glycoproteins. As a heterodimer with F1, interacts with host RHOA; this interaction facilitates virus-induced syncytium formation. The F glycoprotein is synthesized as a F0 inactive precursor that is heavily N-glycosylated and processed at two sites by a host furin-like protease probably in the Golgi. The cleavage site between p27 and F1 may occur after endocytosis to yield the mature F1 and F2 proteins. Both cleavages are required for membrane fusion and p27 is released from the processed protein.

The protein localises to the host Golgi apparatus membrane. It localises to the virion membrane. Its subcellular location is the host cell membrane. Its function is as follows. Inactive precursor that is cleaved at two sites by a furin-like protease to give rise to the mature F1 and F2 fusion glycoproteins. In terms of biological role, class I viral fusion protein. Under the current model, the protein has at least 3 conformational states: pre-fusion native state, pre-hairpin intermediate state, and post-fusion hairpin state. During viral and plasma cell membrane fusion, the coiled coil regions assume a trimer-of-hairpins structure, positioning the fusion peptide in close proximity to the C-terminal region of the ectodomain. The formation of this structure appears to drive apposition and subsequent fusion of viral and cellular membranes leading to delivery of the nucleocapsid into the cytoplasm. This fusion is pH independent and occurs at the plasma or endosomal membrane. The trimer of F1-F2 (F protein) also facilitates the attachment to host cell by binding to host heparan sulfate. F protein is involved in the entry into the host cell through the interaction with host IGF1R. This interaction activates PRKCZ/PKCzeta that recruits host NCL/nucleolin to the apical cell surface where it can bind fusion glycoprotein F1. Later in infection, F protein expressed at the plasma membrane of infected cells can mediate fusion with adjacent cells to form syncytia, a cytopathic effect that could lead to tissue necrosis. F protein may trigger p53-dependent apoptosis. Major determinant of the species specificity of RSV infection. The trimer of F1-F2 (F protein) also facilitates the attachment to host cell by binding to host heparan sulfate. F protein is involved in the entry into the host cell through the interaction with host IGF1R. This interaction activates PRKCZ/PKCzeta that recruits host NCL/nucleolin to the apical cell surface where it can bind fusion glycoprotein F1. Later in infection, F protein expressed at the plasma membrane of infected cells can mediate fusion with adjacent cells to form syncytia, a cytopathic effect that could lead to tissue necrosis. F protein seems to trigger p53-dependent apoptosis. In Homo sapiens (Human), this protein is Fusion glycoprotein F0 (F).